The following is a 124-amino-acid chain: uncharacterized protein (124 aa).

In terms of assembly, interacts with dil1.

This is an uncharacterized protein from Schizosaccharomyces pombe (strain 972 / ATCC 24843) (Fission yeast).